A 157-amino-acid chain; its full sequence is Endoribonuclease YbeY (157 aa).

Zn(2+) contacts are provided by His-116, His-120, and His-126.

It belongs to the endoribonuclease YbeY family. It depends on Zn(2+) as a cofactor.

The protein resides in the cytoplasm. Functionally, single strand-specific metallo-endoribonuclease involved in late-stage 70S ribosome quality control and in maturation of the 3' terminus of the 16S rRNA. This is Endoribonuclease YbeY from Blochmanniella pennsylvanica (strain BPEN).